The following is a 584-amino-acid chain: POTE ankyrin domain family member D (584 aa).

6 ANK repeats span residues 172–201 (EKRTALHLASANGNSEVVQLLLDRRCQLNV), 205–234 (KKRTALIKAIQCQEDECVLMLLEHGADRNI), 238–267 (YGNTALHYAIYNEDKLMAKALLLYGADIES), 271–300 (CGLTPLLLGVHEQKQQVVKFLIKKKANLNV), 304–333 (YGRTALILAVCCGSASIVNLLLEQNVDVSS), and 337–366 (SGQTAREYAVSSHHHVICELLSDYKEKQML). The tract at residues 369 to 502 (SSENSNPEQD…ILTNKQKQIE (134 aa)) is disordered. 3 stretches are compositionally biased toward basic and acidic residues: residues 377–392 (QDLKLTSEEESQRLKV), 401–412 (MSQEPEINKDCD), and 466–481 (EEYHSDEQNDTRKQLS). Polar residues predominate over residues 482-498 (EEQNTGISQDEILTNKQ). The stretch at 494 to 583 (LTNKQKQIEV…LNEEALTKTN (90 aa)) forms a coiled coil.

The protein belongs to the POTE family. In terms of tissue distribution, expressed in prostate, ovary, testis, placenta and prostate cancer cell lines. Localizes to basal and terminal prostate epithelial cells.

The protein resides in the cell membrane. The polypeptide is POTE ankyrin domain family member D (POTED) (Homo sapiens (Human)).